The chain runs to 556 residues: Formate--tetrahydrofolate ligase (556 aa).

Position 65-72 (65-72 (TPAGEGKS)) interacts with ATP.

This sequence belongs to the formate--tetrahydrofolate ligase family.

The enzyme catalyses (6S)-5,6,7,8-tetrahydrofolate + formate + ATP = (6R)-10-formyltetrahydrofolate + ADP + phosphate. It functions in the pathway one-carbon metabolism; tetrahydrofolate interconversion. In Streptococcus equi subsp. equi (strain 4047), this protein is Formate--tetrahydrofolate ligase.